The sequence spans 317 residues: Taste receptor type 2 member 14 (317 aa).

Over 1–7 the chain is Extracellular; that stretch reads MGDVIKS. The helical transmembrane segment at 8–28 threads the bilayer; the sequence is IFTFVLIVEFIIGNLGNSFIA. Residues 29–55 are Cytoplasmic-facing; the sequence is LVNCIDWVKGRKISSVDQILTALAISR. The helical transmembrane segment at 56–76 threads the bilayer; the sequence is ISLVWLIFGSWCVSVFLPALF. Residues 77 to 87 lie on the Extracellular side of the membrane; the sequence is ATEKMFRMLTN. Thr86 and Trp89 together coordinate cholesterol. The chain crosses the membrane as a helical span at residues 88–108; sequence IWTVINHFSVWLATGLGTFYF. Topologically, residues 109-129 are cytoplasmic; that stretch reads LKIANFSNSIFLYLKWRVKKV. A helical transmembrane segment spans residues 130 to 150; it reads VLVLLLVTSVFLFLNIALINI. Over 151-184 the chain is Extracellular; the sequence is HINASINGYRRNKTCSSDSSNFTRFSSLIVLTST. Residues Asn153, Asn162, and Asn171 are each glycosylated (N-linked (GlcNAc...) asparagine). Residue Val180 coordinates cholesterol. A helical membrane pass occupies residues 185-205; it reads VFIFIPFTLSLAMFLLLIFSL. At 206 to 232 the chain is on the cytoplasmic side; sequence WKHRKKMQHXVKRSGDASTKAHRGVKS. The chain crosses the membrane as a helical span at residues 233–253; sequence VITFFLLYAIFCLSFFISVWT. At 254–261 the chain is on the extracellular side; that stretch reads SERLEENL. The chain crosses the membrane as a helical span at residues 262–282; sequence IILSQVMGMAYPSCHSCVLIL. Residues Ser265 and Met268 each contribute to the cholesterol site. The Cytoplasmic portion of the chain corresponds to 283 to 317; it reads GNKKLRQASLSVLLWLRYMFKDGEPSGHKEFRESS.

Belongs to the G-protein coupled receptor T2R family. As to quaternary structure, core component of the TAS2R14-GNAI1 complex, consisting of TAS2R14, GNAI1, GNB1 and GNG2; within the complex interacts with GNAI1. Core component of the TAS2R14-GNAT3 complex, consisting of TAS2R14, GNAT3, GNB1 and GNG2; within the complex interacts with GNAT3. Core component of the TAS2R14-GNAS2 complex, consisting of TAS2R14, GNAS2, GNB1 and GNG2; within the complex interacts with GNAS2.

It is found in the membrane. It catalyses the reaction Ca(2+)(in) = Ca(2+)(out). It carries out the reaction 3',5'-cyclic AMP(in) = 3',5'-cyclic AMP(out). With respect to regulation, basal activity is enhanced by binding to bitter tastants, such as flufenamic acid and aristolochic acid. Regulated by cholesterol in a concentration-dependent manner. Functionally, gustducin-linked G-protein coupled receptor that plays a role in the perception of bitterness. The activity of this receptor stimulates GNAT3, activating the gustducin G-protein pathway. Likely plays a role in sensing the chemical composition of the gastrointestinal content and other extra-oral tissues via the inhibitory G-protein pathways. The sequence is that of Taste receptor type 2 member 14 (TAS2R14) from Gorilla gorilla gorilla (Western lowland gorilla).